A 278-amino-acid chain; its full sequence is Putative phosphoenolpyruvate synthase regulatory protein (278 aa).

157–164 contacts ADP; the sequence is GVSRSGKT.

It belongs to the pyruvate, phosphate/water dikinase regulatory protein family. PSRP subfamily.

It carries out the reaction [pyruvate, water dikinase] + ADP = [pyruvate, water dikinase]-phosphate + AMP + H(+). The catalysed reaction is [pyruvate, water dikinase]-phosphate + phosphate + H(+) = [pyruvate, water dikinase] + diphosphate. Functionally, bifunctional serine/threonine kinase and phosphorylase involved in the regulation of the phosphoenolpyruvate synthase (PEPS) by catalyzing its phosphorylation/dephosphorylation. The chain is Putative phosphoenolpyruvate synthase regulatory protein from Vibrio parahaemolyticus serotype O3:K6 (strain RIMD 2210633).